Here is a 170-residue protein sequence, read N- to C-terminus: Adenine phosphoribosyltransferase (170 aa).

Belongs to the purine/pyrimidine phosphoribosyltransferase family. As to quaternary structure, homodimer.

Its subcellular location is the cytoplasm. It carries out the reaction AMP + diphosphate = 5-phospho-alpha-D-ribose 1-diphosphate + adenine. The protein operates within purine metabolism; AMP biosynthesis via salvage pathway; AMP from adenine: step 1/1. Catalyzes a salvage reaction resulting in the formation of AMP, that is energically less costly than de novo synthesis. In Fusobacterium nucleatum subsp. nucleatum (strain ATCC 25586 / DSM 15643 / BCRC 10681 / CIP 101130 / JCM 8532 / KCTC 2640 / LMG 13131 / VPI 4355), this protein is Adenine phosphoribosyltransferase.